Reading from the N-terminus, the 263-residue chain is 5'-nucleotidase SurE (263 aa).

A divalent metal cation-binding residues include D21, D22, S52, and N105.

It belongs to the SurE nucleotidase family. It depends on a divalent metal cation as a cofactor.

Its subcellular location is the cytoplasm. It catalyses the reaction a ribonucleoside 5'-phosphate + H2O = a ribonucleoside + phosphate. In terms of biological role, nucleotidase that shows phosphatase activity on nucleoside 5'-monophosphates. This chain is 5'-nucleotidase SurE, found in Vibrio cholerae serotype O1 (strain ATCC 39541 / Classical Ogawa 395 / O395).